Here is a 296-residue protein sequence, read N- to C-terminus: Ribosome biogenesis GTPase A (296 aa).

The 165-residue stretch at 14–178 (RRQVTEKLKL…LLDTPGILWP (165 aa)) folds into the CP-type G domain. GTP contacts are provided by residues 58-61 (NKAD), 130-135 (NVGKST), and G174.

Belongs to the TRAFAC class YlqF/YawG GTPase family. MTG1 subfamily. Interacts with ctc. Interacts with the immature 50S ribosome subunit. 2 molecules of rbgA bind to one 50S subunit.

The protein resides in the cytoplasm. Functionally, essential protein that is required for a late step of 50S ribosomal subunit assembly. Has GTPase activity that is stimulated by interaction with the immature 50S ribosome subunit. Binds to the 23S rRNA. Required for the association of ribosomal proteins rplP and rpmA with the large subunit. This Bacillus cereus (strain ATCC 14579 / DSM 31 / CCUG 7414 / JCM 2152 / NBRC 15305 / NCIMB 9373 / NCTC 2599 / NRRL B-3711) protein is Ribosome biogenesis GTPase A.